Here is a 389-residue protein sequence, read N- to C-terminus: Phosphoribosylformylglycinamidine cyclo-ligase, chloroplastic (389 aa).

The transit peptide at 1 to 58 (MEARILQSSSSCYSSLYAVNRSRFSSVSSPKPFSVSFAQTTRTRTRVLSMSKKDGRTD) directs the protein to the chloroplast. The tract at residues 46–65 (RVLSMSKKDGRTDKDDDTDS) is disordered.

The protein belongs to the AIR synthase family.

The protein localises to the plastid. The protein resides in the chloroplast. It catalyses the reaction 2-formamido-N(1)-(5-O-phospho-beta-D-ribosyl)acetamidine + ATP = 5-amino-1-(5-phospho-beta-D-ribosyl)imidazole + ADP + phosphate + H(+). Its pathway is purine metabolism; IMP biosynthesis via de novo pathway; 5-amino-1-(5-phospho-D-ribosyl)imidazole from N(2)-formyl-N(1)-(5-phospho-D-ribosyl)glycinamide: step 2/2. The protein is Phosphoribosylformylglycinamidine cyclo-ligase, chloroplastic (PUR5) of Arabidopsis thaliana (Mouse-ear cress).